A 125-amino-acid chain; its full sequence is Holo-[acyl-carrier-protein] synthase (125 aa).

Positions 8 and 56 each coordinate Mg(2+).

This sequence belongs to the P-Pant transferase superfamily. AcpS family. It depends on Mg(2+) as a cofactor.

It is found in the cytoplasm. The catalysed reaction is apo-[ACP] + CoA = holo-[ACP] + adenosine 3',5'-bisphosphate + H(+). Its function is as follows. Transfers the 4'-phosphopantetheine moiety from coenzyme A to a Ser of acyl-carrier-protein. This Borrelia turicatae (strain 91E135) protein is Holo-[acyl-carrier-protein] synthase.